The sequence spans 130 residues: Small ribosomal subunit protein uS8y (130 aa).

Belongs to the universal ribosomal protein uS8 family.

In Arabidopsis thaliana (Mouse-ear cress), this protein is Small ribosomal subunit protein uS8y (RPS15AC).